Consider the following 920-residue polypeptide: Histone-lysine N-methyltransferase, H3 lysine-4 specific (920 aa).

Residues 94–179 (TQVFVSNISP…KPLSVVLDRD (86 aa)) enclose the RRM domain. Basic and acidic residues predominate over residues 205 to 216 (KQRFEREDESSR). Disordered regions lie at residues 205–242 (KQRF…TLSN) and 448–485 (KRVD…YQLN). Composition is skewed to polar residues over residues 233-242 (PSKNSQTLSN) and 453-462 (SKMNLSAGSK). Residues 463–476 (TKSKLQRRRRRRHE) show a composition bias toward basic residues. Positions 749–754 (RVNNRR) match the RxxxRR motif motif. The SET domain occupies 781–898 (KQLHFGPSRI…HGEELTYDYK (118 aa)). S-adenosyl-L-methionine is bound at residue Tyr897. Residues 904-920 (DKIPCLCGAPTCRGYLN) form the Post-SET domain.

Belongs to the class V-like SAM-binding methyltransferase superfamily. In terms of assembly, component of the Set1C/COMPASS complex composed of ash2, sdc1, set1, shg1, spp1, swd1, swd2 and swd3.

It is found in the nucleus. The protein resides in the chromosome. The catalysed reaction is L-lysyl(4)-[histone H3] + 3 S-adenosyl-L-methionine = N(6),N(6),N(6)-trimethyl-L-lysyl(4)-[histone H3] + 3 S-adenosyl-L-homocysteine + 3 H(+). It carries out the reaction N(6)-methyl-L-lysyl(4)-[histone H3] + S-adenosyl-L-methionine = N(6),N(6)-dimethyl-L-lysyl(4)-[histone H3] + S-adenosyl-L-homocysteine + H(+). The enzyme catalyses N(6),N(6)-dimethyl-L-lysyl(4)-[histone H3] + S-adenosyl-L-methionine = N(6),N(6),N(6)-trimethyl-L-lysyl(4)-[histone H3] + S-adenosyl-L-homocysteine + H(+). Its function is as follows. Catalytic component of the COMPASS (Set1C) complex that specifically mono-, di- and trimethylates histone H3 to form H3K4me1/2/3. Binds RNA which might negatively affect its histone methyltransferase activity. COMPASS recognizes ubiquitinated H2B on one face of the nucleosome which stimulates the methylation of H3 on the opposing face. Methylation promotes maintenance of active chromatin states at euchromatic chromosomal domains and is present throughout the cell cycle. Plays a role in telomere maintenance and DNA repair in an ATM kinase rad3-dependent pathway. Required for efficient telomeric and centromeric silencing. The protein is Histone-lysine N-methyltransferase, H3 lysine-4 specific of Schizosaccharomyces pombe (strain 972 / ATCC 24843) (Fission yeast).